The sequence spans 303 residues: Oxygen-dependent coproporphyrinogen-III oxidase (303 aa).

Ser-94 contributes to the substrate binding site. A divalent metal cation-binding residues include His-98 and His-108. The active-site Proton donor is His-108. 110-112 (NVR) provides a ligand contact to substrate. Positions 147 and 177 each coordinate a divalent metal cation. The tract at residues 242 to 277 (YVEFNLVYDRGTLFGLQTGGRTESILMSLPPLVRWE) is important for dimerization. Residue 260–262 (GGR) participates in substrate binding.

This sequence belongs to the aerobic coproporphyrinogen-III oxidase family. As to quaternary structure, homodimer. A divalent metal cation serves as cofactor.

It localises to the cytoplasm. It carries out the reaction coproporphyrinogen III + O2 + 2 H(+) = protoporphyrinogen IX + 2 CO2 + 2 H2O. It functions in the pathway porphyrin-containing compound metabolism; protoporphyrin-IX biosynthesis; protoporphyrinogen-IX from coproporphyrinogen-III (O2 route): step 1/1. In terms of biological role, involved in the heme biosynthesis. Catalyzes the aerobic oxidative decarboxylation of propionate groups of rings A and B of coproporphyrinogen-III to yield the vinyl groups in protoporphyrinogen-IX. This chain is Oxygen-dependent coproporphyrinogen-III oxidase, found in Saccharophagus degradans (strain 2-40 / ATCC 43961 / DSM 17024).